Reading from the N-terminus, the 374-residue chain is RNA polymerase sigma factor SigA (374 aa).

Positions 141–211 are sigma-70 factor domain-2; that stretch reads LAEANLRLVV…TRAIADQART (71 aa). An Interaction with polymerase core subunit RpoC motif is present at residues 165–168; sequence DLIQ. Residues 220–296 are sigma-70 factor domain-3; the sequence is ETINKLIRVQ…DQDATSPSDH (77 aa). Residues 309-362 form a sigma-70 factor domain-4 region; the sequence is VLDTLTDREENVLRLRFGLDDGRTRTLEEVGRVFGVTRERIRQIEAKALRKLRH. The segment at residues 335 to 354 is a DNA-binding region (H-T-H motif); that stretch reads LEEVGRVFGVTRERIRQIEA.

This sequence belongs to the sigma-70 factor family. RpoD/SigA subfamily. Interacts transiently with the RNA polymerase catalytic core.

Its subcellular location is the cytoplasm. In terms of biological role, sigma factors are initiation factors that promote the attachment of RNA polymerase to specific initiation sites and are then released. This sigma factor is the primary sigma factor during exponential growth. In Listeria innocua serovar 6a (strain ATCC BAA-680 / CLIP 11262), this protein is RNA polymerase sigma factor SigA.